A 909-amino-acid polypeptide reads, in one-letter code: Myb-like protein Q (909 aa).

3 disordered regions span residues 15-65 (TTNN…QQQQ), 84-149 (QQQN…QQIL), and 216-280 (SAPS…KGPW). Residues 17–46 (NNNSNNNNNNNNNNNNNNNNNNNNNINQNH) are compositionally biased toward low complexity. Over residues 47-56 (QHQHQHHHHQ) the composition is skewed to basic residues. A compositionally biased stretch (low complexity) spans 84-126 (QQQNYGESTTSTSMIPPSITTSLTPLTPTLSSQPQNIQQQQQQ). The span at 127-139 (QHHHQQQHHHHHQ) shows a compositional bias: basic residues. Residues 216–226 (SAPSTPLSMSP) show a composition bias toward polar residues. HTH myb-type domains are found at residues 272–327 (SPGI…SPEV) and 328–378 (RKTN…LKKI). 2 consecutive DNA-binding regions (H-T-H motif) follow at residues 300-323 (WSSIAAKIPGRIGKQCRERWFNHL) and 351-374 (WTAISKMLDGRPANAIKNHWNSTL). Residues 379–389 (GGDSKSLNKEK) show a composition bias toward basic and acidic residues. Disordered stretches follow at residues 379 to 482 (GGDS…NTAI), 497 to 531 (QTTPNSSPSLSSKKTHDKQKVPQSPKNSKQQQTQQ), 616 to 642 (SMEQHHYQQQQQAQQQQHQQQQHQQQQ), 672 to 748 (YQQQ…HPIE), and 826 to 855 (LNTTTTTTNNNNNNNNNNNNNNNNNNIPTP). A compositionally biased stretch (acidic residues) spans 390–401 (DDDDDDDEDAED). Composition is skewed to low complexity over residues 415–431 (SSSSTTTTTTTTTTNSS) and 444–482 (STTTSTNNLNNSTNSTNSINNNNNNNNNNNNSSNTNTAI). Positions 497–508 (QTTPNSSPSLSS) are enriched in polar residues. 4 stretches are compositionally biased toward low complexity: residues 622–642 (YQQQQQAQQQQHQQQQHQQQQ), 672–726 (YQQQ…QQQQ), 733–744 (NSNNTDTTFSNS), and 826–851 (LNTTTTTTNNNNNNNNNNNNNNNNNN).

The protein resides in the nucleus. This is Myb-like protein Q (mybQ) from Dictyostelium discoideum (Social amoeba).